The sequence spans 325 residues: Biotin synthase (325 aa).

The region spanning threonine 49 to arginine 267 is the Radical SAM core domain. [4Fe-4S] cluster-binding residues include cysteine 64, cysteine 68, and cysteine 71. Residues cysteine 108, cysteine 139, cysteine 199, and arginine 271 each coordinate [2Fe-2S] cluster.

Belongs to the radical SAM superfamily. Biotin synthase family. Homodimer. The cofactor is [4Fe-4S] cluster. Requires [2Fe-2S] cluster as cofactor.

It catalyses the reaction (4R,5S)-dethiobiotin + (sulfur carrier)-SH + 2 reduced [2Fe-2S]-[ferredoxin] + 2 S-adenosyl-L-methionine = (sulfur carrier)-H + biotin + 2 5'-deoxyadenosine + 2 L-methionine + 2 oxidized [2Fe-2S]-[ferredoxin]. It functions in the pathway cofactor biosynthesis; biotin biosynthesis; biotin from 7,8-diaminononanoate: step 2/2. Catalyzes the conversion of dethiobiotin (DTB) to biotin by the insertion of a sulfur atom into dethiobiotin via a radical-based mechanism. The chain is Biotin synthase from Acidiphilium cryptum (strain JF-5).